The following is a 146-amino-acid chain: Large ribosomal subunit protein uL23B (146 aa).

Residues 1 to 22 are disordered; sequence MAPSSNKVGKAIQAKKAVVKGS.

Belongs to the universal ribosomal protein uL23 family.

Its function is as follows. This protein binds to a specific region on the 26S rRNA. The sequence is that of Large ribosomal subunit protein uL23B (rpl-23A.2) from Caenorhabditis elegans.